A 217-amino-acid chain; its full sequence is UPF0193 protein EVG1 (217 aa).

This sequence belongs to the UPF0193 (EVG1) family.

This Homo sapiens (Human) protein is UPF0193 protein EVG1 (C22orf23).